Consider the following 161-residue polypeptide: Ribosome maturation factor RimP (161 aa).

The protein belongs to the RimP family.

The protein localises to the cytoplasm. Required for maturation of 30S ribosomal subunits. In Rickettsia africae (strain ESF-5), this protein is Ribosome maturation factor RimP.